The following is a 170-amino-acid chain: Anaphase-promoting complex subunit SWM1 (170 aa).

Basic and acidic residues-rich tracts occupy residues 48–67 and 132–141; these read NTRT…RNSN and GANEPRKETI. Disordered regions lie at residues 48 to 81 and 122 to 141; these read NTRT…MTSE and LNGG…KETI.

Belongs to the APC13 family. As to quaternary structure, the APC/C is composed of at least 13 subunits that stay tightly associated throughout the cell cycle: APC1, APC2, APC4, APC5, APC9, APC11, CDC16, CDC23, CDC26, CDC27, DOC1, MND2 and SWM1. SWM1 interacts directly with CDC23 and APC5, and is required to tether APC9, CDC16, CDC26 and CDC27 to the complex.

It participates in protein modification; protein ubiquitination. In terms of biological role, component of the anaphase promoting complex/cyclosome (APC/C), a cell cycle-regulated E3 ubiquitin-protein ligase complex that controls progression through mitosis and the G1 phase of the cell cycle. The APC/C is thought to confer substrate specificity and, in the presence of ubiquitin-conjugating E2 enzymes, it catalyzes the formation of protein-ubiquitin conjugates that are subsequently degraded by the 26S proteasome. In early mitosis, the APC/C is activated by CDC20 and targets securin PDS1, the B-type cyclin CLB5, and other anaphase inhibitory proteins for proteolysis, thereby triggering the separation of sister chromatids at the metaphase-to-anaphase transition. In late mitosis and in G1, degradation of CLB5 allows activation of the APC/C by CDH1, which is needed to destroy CDC20 and the B-type cyclin CLB2 to allow exit from mitosis and creating the low CDK state necessary for cytokinesis and for reforming prereplicative complexes in G1 prior to another round of replication. SWM1 is required for APC/C activity in meiosis. This is Anaphase-promoting complex subunit SWM1 (SWM1) from Saccharomyces cerevisiae (strain ATCC 204508 / S288c) (Baker's yeast).